A 385-amino-acid chain; its full sequence is Cotranscriptional regulator ARB2A homolog (385 aa).

Disordered stretches follow at residues 1–65 and 220–239; these read MSDI…NGEE and EEQK…NGKL. Positions 52-62 are enriched in low complexity; that stretch reads NNNNNNSNNSN. The segment covering 220 to 238 has biased composition (basic and acidic residues); it reads EEQKEKAKEEEEKKDDNGK.

It belongs to the ARB2A family.

The sequence is that of Cotranscriptional regulator ARB2A homolog from Dictyostelium discoideum (Social amoeba).